Here is a 173-residue protein sequence, read N- to C-terminus: Transcription factor E (173 aa).

An HTH TFE/IIEalpha-type domain is found at 6–89 (PLEELLEFVR…YWYVDRETLN (84 aa)).

Belongs to the TFE family. In terms of assembly, monomer. Interaction with RNA polymerase subunits RpoF and RpoE is necessary for Tfe stimulatory transcription activity. Able to interact with Tbp and RNA polymerase in the absence of DNA promoter. Interacts both with the preinitiation and elongation complexes.

Transcription factor that plays a role in the activation of archaeal genes transcribed by RNA polymerase. Facilitates transcription initiation by enhancing TATA-box recognition by TATA-box-binding protein (Tbp), and transcription factor B (Tfb) and RNA polymerase recruitment. Not absolutely required for transcription in vitro, but particularly important in cases where Tbp or Tfb function is not optimal. It dynamically alters the nucleic acid-binding properties of RNA polymerases by stabilizing the initiation complex and destabilizing elongation complexes. Seems to translocate with the RNA polymerase following initiation and acts by binding to the non template strand of the transcription bubble in elongation complexes. The polypeptide is Transcription factor E (Ignicoccus hospitalis (strain KIN4/I / DSM 18386 / JCM 14125)).